The sequence spans 328 residues: GTPase Obg 2 (328 aa).

Residues Met-1–Val-139 enclose the Obg domain. Positions Ser-140 to Val-309 constitute an OBG-type G domain. GTP-binding positions include Gly-146–Ser-153, Phe-171–Glu-175, Asp-192–Gly-195, Asn-259–Asp-262, and Gly-290–Glu-292. Mg(2+)-binding residues include Ser-153 and Thr-173.

It belongs to the TRAFAC class OBG-HflX-like GTPase superfamily. OBG GTPase family. Monomer. Mg(2+) is required as a cofactor.

The protein resides in the cytoplasm. An essential GTPase which binds GTP, GDP and possibly (p)ppGpp with moderate affinity, with high nucleotide exchange rates and a fairly low GTP hydrolysis rate. Plays a role in control of the cell cycle, stress response, ribosome biogenesis and in those bacteria that undergo differentiation, in morphogenesis control. This is GTPase Obg 2 from Anaplasma marginale (strain Florida).